Here is a 121-residue protein sequence, read N- to C-terminus: Large ribosomal subunit protein bL19 (121 aa).

It belongs to the bacterial ribosomal protein bL19 family.

This protein is located at the 30S-50S ribosomal subunit interface and may play a role in the structure and function of the aminoacyl-tRNA binding site. The sequence is that of Large ribosomal subunit protein bL19 from Borrelia garinii subsp. bavariensis (strain ATCC BAA-2496 / DSM 23469 / PBi) (Borreliella bavariensis).